The sequence spans 202 residues: N-(5'-phosphoribosyl)anthranilate isomerase (202 aa).

This sequence belongs to the TrpF family.

The catalysed reaction is N-(5-phospho-beta-D-ribosyl)anthranilate = 1-(2-carboxyphenylamino)-1-deoxy-D-ribulose 5-phosphate. Its pathway is amino-acid biosynthesis; L-tryptophan biosynthesis; L-tryptophan from chorismate: step 3/5. The chain is N-(5'-phosphoribosyl)anthranilate isomerase from Bacillus cereus (strain ATCC 14579 / DSM 31 / CCUG 7414 / JCM 2152 / NBRC 15305 / NCIMB 9373 / NCTC 2599 / NRRL B-3711).